We begin with the raw amino-acid sequence, 491 residues long: Homeobox protein unplugged (491 aa).

Disordered regions lie at residues methionine 1–threonine 23, serine 46–glutamate 69, alanine 124–histidine 146, and phenylalanine 227–alanine 329. Residues glycine 254–leucine 264 show a composition bias toward polar residues. Over residues glycine 305 to serine 316 the composition is skewed to gly residues. A DNA-binding region (homeobox) is located at residues serine 323–lysine 382.

The protein resides in the nucleus. Its function is as follows. Plays a regulatory role in neural branching of the tracheae: segment-specific aspects of these neural branching patterns appear to be generated by homeotic regulation of expression. This Drosophila pseudoobscura pseudoobscura (Fruit fly) protein is Homeobox protein unplugged.